Reading from the N-terminus, the 59-residue chain is Ribosome biogenesis protein Nop10 (59 aa).

The protein belongs to the NOP10 family.

Its function is as follows. Involved in ribosome biogenesis; more specifically in 18S rRNA pseudouridylation and in cleavage of pre-rRNA. The polypeptide is Ribosome biogenesis protein Nop10 (Thermococcus kodakarensis (strain ATCC BAA-918 / JCM 12380 / KOD1) (Pyrococcus kodakaraensis (strain KOD1))).